The following is a 716-amino-acid chain: Hepatocyte growth factor-like protein (716 aa).

The N-terminal stretch at 1 to 18 is a signal peptide; sequence MGWLPLLLLLVQCSRALG. Residues 19 to 105 form the PAN domain; that stretch reads QRSPLNDFQL…SLCHLFQKKD (87 aa). 20 cysteine pairs are disulfide-bonded: C56–C78, C60–C66, C110–C186, C131–C169, C157–C181, C191–C268, C194–C333, C212–C251, C240–C263, C292–C370, C313–C352, C341–C364, C379–C457, C400–C440, C428–C452, C477–C593, C512–C528, C607–C672, C637–C651, and C662–C690. N72 carries an N-linked (GlcNAc...) asparagine glycan. Kringle domains follow at residues 110 to 186, 191 to 268, 292 to 370, and 379 to 457; these read CIMD…IKTC, CVLC…LPSC, CFRG…IPRC, and CYHG…LQRC. N173 is a glycosylation site (N-linked (GlcNAc...) asparagine). The N-linked (GlcNAc...) asparagine glycan is linked to N305. In terms of domain architecture, Peptidase S1 spans 489–714; it reads VVGGHPGNSP…FVDWINKVMQ (226 aa). N620 carries N-linked (GlcNAc...) asparagine glycosylation.

This sequence belongs to the peptidase S1 family. Plasminogen subfamily. Dimer of an alpha chain and a beta chain linked by a disulfide bond. Interacts (via beta chain) with MST1R (via SEMA domain). Post-translationally, cleaved after Arg-488, probably by HPN/Hepsin, to yield the active form consisting of two disulfide-linked chains. In terms of tissue distribution, liver. Lower levels in lung, placenta and adrenal.

The protein localises to the secreted. In Mus musculus (Mouse), this protein is Hepatocyte growth factor-like protein (Mst1).